The sequence spans 257 residues: Thiazole synthase (257 aa).

Residue Lys95 is the Schiff-base intermediate with DXP of the active site. 1-deoxy-D-xylulose 5-phosphate contacts are provided by residues Gly156, 182–183 (AG), and 204–205 (NT).

It belongs to the ThiG family. As to quaternary structure, homotetramer. Forms heterodimers with either ThiH or ThiS.

It localises to the cytoplasm. The catalysed reaction is [ThiS sulfur-carrier protein]-C-terminal-Gly-aminoethanethioate + 2-iminoacetate + 1-deoxy-D-xylulose 5-phosphate = [ThiS sulfur-carrier protein]-C-terminal Gly-Gly + 2-[(2R,5Z)-2-carboxy-4-methylthiazol-5(2H)-ylidene]ethyl phosphate + 2 H2O + H(+). Its pathway is cofactor biosynthesis; thiamine diphosphate biosynthesis. Its function is as follows. Catalyzes the rearrangement of 1-deoxy-D-xylulose 5-phosphate (DXP) to produce the thiazole phosphate moiety of thiamine. Sulfur is provided by the thiocarboxylate moiety of the carrier protein ThiS. In vitro, sulfur can be provided by H(2)S. The protein is Thiazole synthase of Vibrio vulnificus (strain CMCP6).